The following is a 261-amino-acid chain: Thiamine thiazole synthase (261 aa).

Residues S40, E59–R60, G67, V133, and H159–D161 each bind NAD(+). D161 and H176 together coordinate Fe cation. S179 and M226 together coordinate NAD(+). A glycine-binding site is contributed by R236.

It belongs to the THI4 family. As to quaternary structure, homooctamer; tetramer of dimers. The cofactor is Fe(2+).

It catalyses the reaction hydrogen sulfide + glycine + NAD(+) = ADP-5-ethyl-4-methylthiazole-2-carboxylate + nicotinamide + 3 H2O + H(+). Its pathway is cofactor biosynthesis; thiamine diphosphate biosynthesis. Involved in the biosynthesis of the thiazole moiety of thiamine. Catalyzes the conversion of NAD and glycine to adenosine diphosphate 5-(2-hydroxyethyl)-4-methylthiazole-2-carboxylate (ADT), an adenylated thiazole intermediate, using free sulfide as a source of sulfur. The protein is Thiamine thiazole synthase of Methanococcus maripaludis (strain C5 / ATCC BAA-1333).